The primary structure comprises 391 residues: Multidrug resistance protein MdtL (391 aa).

The next 12 helical transmembrane spans lie at 4-24 (FLICSFALVLLYPAGIDMYLV), 42-62 (IAFSVYLAGMAAAMLFAGKVA), 69-89 (PVAIPGAALFIIASVFCSLAE), 93-113 (LFLAGRFLQGLGAGCCYVVAF), 131-151 (LLNGITCIIPVLAPVLGHLIM), 158-178 (SLFWTMATMGIAVLMLSLFIL), 203-222 (FFLSRVVITTLSVSVILTFV), 245-265 (ALTAGVSMTVSFSTPFALGIF), 269-289 (TLMITSQVLFLAAGITLAVSP), 293-313 (VSLFGITLICAGFSVGFGVAM), 331-351 (LGIAQVCGSSLWIWLAAVVGI), and 356-376 (MLIGILIACSIVSLLLIMFVA).

Belongs to the major facilitator superfamily. DHA1 family. MdtL (TC 2.A.1.2.22) subfamily.

Its subcellular location is the cell inner membrane. Functionally, confers resistance to chloramphenicol. This is Multidrug resistance protein MdtL from Escherichia coli O17:K52:H18 (strain UMN026 / ExPEC).